Reading from the N-terminus, the 243-residue chain is MASLFKDPTKLSAYRDRRFTGTQEEYEAALQASVTVYVGNMSFYTTEEQAYELFSRAGEIRKIIMGLDKNSKTPCGFCFILYYSREDAEDAVKYISGTMLDDRPIRVDFDWGFEEGRQWGRGRSGGQVRDEYRTDYDPGRGGYGKMVQKELEAQRELVDYGGAFQPNAPPQYDRGDRKRGYGDSYRNDRDYQRKRYRNDERSSQRAPDSEFKRDAIDSEKNPRFREKGDSDEEDDDYDKRRRR.

MRNA is bound by residues Tyr-14, Tyr-37, 106 to 110 (RVDFD), 117 to 121 (RQWGR), and 127 to 128 (QV). Positions 34-112 (VTVYVGNMSF…RPIRVDFDWG (79 aa)) constitute an RRM domain. 2 disordered regions span residues 120-144 (GRGR…GGYG) and 161-243 (GGAF…RRRR). Basic and acidic residues-rich tracts occupy residues 128–138 (VRDEYRTDYDP) and 173–228 (DRGD…REKG).

It belongs to the RRM NCBP2 family. Component of the nuclear cap-binding complex (CBC), a heterodimer composed of ABH1/CBP80 and CBP20 that interacts with m7GpppG-capped RNA.

It is found in the nucleus. It localises to the cytoplasm. Functionally, component of the cap-binding complex (CBC), which binds co-transcriptionally to the 5' cap of pre-mRNAs and is involved in various processes such as pre-mRNA splicing and RNA-mediated gene silencing (RNAi) by microRNAs (miRNAs). The CBC complex is involved in miRNA-mediated RNA interference and is required for primary miRNA processing. In the CBC complex, CBP20 recognizes and binds capped RNAs (m7GpppG-capped RNA) but requires ABH1/CBP80 to stabilize the movement of its N-terminal loop and lock the CBC into a high affinity cap-binding state with the cap structure. CBP20 also plays a role in stabilization of ABH1/CBP80 and ABH1/CBP80 localization to the nucleus. The sequence is that of Nuclear cap-binding protein subunit 2 (CBP20) from Oryza sativa subsp. japonica (Rice).